The following is a 283-amino-acid chain: Phytanoyl-CoA dioxygenase (283 aa).

2-oxoglutarate-binding positions include Lys-99, Met-138, His-153–Asp-155, and Trp-170. The Fe cation site is built by His-153 and Asp-155. Residue His-238 coordinates Fe cation. The 2-oxoglutarate site is built by Ser-240 and Arg-249.

It belongs to the PhyH family. It depends on Fe cation as a cofactor. L-ascorbate serves as cofactor.

It catalyses the reaction phytanoyl-CoA + 2-oxoglutarate + O2 = 2-hydroxyphytanoyl-CoA + succinate + CO2. It participates in lipid metabolism; fatty acid metabolism. In terms of biological role, converts phytanoyl-CoA to 2-hydroxyphytanoyl-CoA. The polypeptide is Phytanoyl-CoA dioxygenase (Arabidopsis thaliana (Mouse-ear cress)).